Consider the following 504-residue polypeptide: Cytochrome P450 71B4 (504 aa).

A helical transmembrane segment spans residues 1–21 (MVSLLSFFLLLLVPIFFLLIF). A heme-binding site is contributed by cysteine 446.

The protein belongs to the cytochrome P450 family. Requires heme as cofactor.

The protein localises to the membrane. This Arabidopsis thaliana (Mouse-ear cress) protein is Cytochrome P450 71B4 (CYP71B4).